The following is a 247-amino-acid chain: 5-oxoprolinase subunit A (247 aa).

It belongs to the LamB/PxpA family. Forms a complex composed of PxpA, PxpB and PxpC.

It carries out the reaction 5-oxo-L-proline + ATP + 2 H2O = L-glutamate + ADP + phosphate + H(+). Functionally, catalyzes the cleavage of 5-oxoproline to form L-glutamate coupled to the hydrolysis of ATP to ADP and inorganic phosphate. The sequence is that of 5-oxoprolinase subunit A from Klebsiella pneumoniae subsp. pneumoniae (strain ATCC 700721 / MGH 78578).